The sequence spans 1454 residues: Alpha-2-macroglobulin-like protein 1 (1454 aa).

An N-terminal signal peptide occupies residues 1 to 17; sequence MWAQLLLGMLALSPAIA. Cys-40 and Cys-78 are oxidised to a cystine. Asn-120 carries N-linked (GlcNAc...) asparagine glycosylation. 2 disulfides stabilise this stretch: Cys-241/Cys-291 and Cys-259/Cys-279. 2 N-linked (GlcNAc...) asparagine glycosylation sites follow: Asn-281 and Asn-409. Cystine bridges form between Cys-464–Cys-557, Cys-589–Cys-769, Cys-819–Cys-847, Cys-845–Cys-881, Cys-919–Cys-1307, Cys-1075–Cys-1123, and Cys-1338–Cys-1453. The segment at 695–726 is bait region; that stretch reads SHRSPEYSTAMGAGGGHPEAFESSTPLHQAED. Asn-857 carries N-linked (GlcNAc...) asparagine glycosylation. A cross-link (isoglutamyl cysteine thioester (Cys-Gln)) is located at residues 970 to 973; it reads CGEQ. Asn-1020 is a glycosylation site (N-linked (GlcNAc...) asparagine).

This sequence belongs to the protease inhibitor I39 (alpha-2-macroglobulin) family. Monomer. In terms of tissue distribution, in the epidermis, expressed predominantly in the granular layer at the apical edge of keratinocytes (at protein level). Also detected in placenta, testis and thymus but not in epithelia of kidney, lung, small intestine or colon.

It is found in the secreted. Is able to inhibit all four classes of proteinases by a unique 'trapping' mechanism. This protein has a peptide stretch, called the 'bait region' which contains specific cleavage sites for different proteinases. When a proteinase cleaves the bait region, a conformational change is induced in the protein which traps the proteinase. The entrapped enzyme remains active against low molecular weight substrates (activity against high molecular weight substrates is greatly reduced). Following cleavage in the bait region a thioester bond is hydrolyzed and mediates the covalent binding of the protein to the proteinase. Displays inhibitory activity against chymotrypsin, papain, thermolysin, subtilisin A and, to a lesser extent, elastase but not trypsin. May play an important role during desquamation by inhibiting extracellular proteases. This is Alpha-2-macroglobulin-like protein 1 from Homo sapiens (Human).